Here is a 360-residue protein sequence, read N- to C-terminus: Isopentenyl-diphosphate delta-isomerase (360 aa).

6-7 (RK) contacts substrate. FMN-binding positions include Thr62, 63–65 (GMT), Ser93, and Asn122. Position 93–95 (93–95 (SQR)) interacts with substrate. Gln157 lines the substrate pocket. Glu158 contributes to the Mg(2+) binding site. FMN-binding positions include Lys189, Ser214, Thr219, 272-274 (GIR), and 293-294 (AL).

Belongs to the IPP isomerase type 2 family. Homooctamer. Dimer of tetramers. FMN is required as a cofactor. It depends on NADPH as a cofactor. Mg(2+) serves as cofactor.

It localises to the cytoplasm. It carries out the reaction isopentenyl diphosphate = dimethylallyl diphosphate. In terms of biological role, involved in the biosynthesis of isoprenoids. Catalyzes the 1,3-allylic rearrangement of the homoallylic substrate isopentenyl (IPP) to its allylic isomer, dimethylallyl diphosphate (DMAPP). The chain is Isopentenyl-diphosphate delta-isomerase from Ignicoccus hospitalis (strain KIN4/I / DSM 18386 / JCM 14125).